The sequence spans 67 residues: Transcription elongation factor Spt4 (67 aa).

Cys7, Cys10, Cys19, and Cys22 together coordinate Zn(2+).

This sequence belongs to the archaeal Spt4 family. In terms of assembly, heterodimer composed of Spt4 and Spt5. Interacts with RNA polymerase (RNAP). The complex interacts with FttA.

It localises to the chromosome. Its function is as follows. The Stp4-Spt5 complex stimulates transcription elongation on both naked DNA and histone-bound DNA (chromatin), facilitating transcription through the histone barrier. Neither protein functions alone. The complex also stimulates the transcription termination activity of FttA, neither protein alone stimulates FttA-dependent termination. This chain is Transcription elongation factor Spt4, found in Thermococcus kodakarensis (strain ATCC BAA-918 / JCM 12380 / KOD1) (Pyrococcus kodakaraensis (strain KOD1)).